The primary structure comprises 315 residues: Olfactory receptor 3A1 (315 aa).

The Extracellular portion of the chain corresponds to 1 to 28 (MQPESGANGTVIAEFILLGLLEAPGLQP). N-linked (GlcNAc...) asparagine glycosylation is present at Asn-8. Residues 29–52 (VVFVLFLFAYLVTVGGNLSILAAV) form a helical membrane-spanning segment. Residues 53-60 (LVEPELHT) are Cytoplasmic-facing. A helical membrane pass occupies residues 61-82 (PMYFFLGNLSVLDVGCISVTVP). Residues 83-103 (SMLSRLLSRKRAVPCGACLTQ) lie on the Extracellular side of the membrane. Cys-100 and Cys-192 are oxidised to a cystine. The chain crosses the membrane as a helical span at residues 104–123 (LFFFHLFVGVDCFLLIAMAY). At 124–143 (DRFLAICRPLTYSTRMSQTV) the chain is on the cytoplasmic side. Residues 144 to 161 (QRMLVAASWACAFTNALT) form a helical membrane-spanning segment. The Extracellular portion of the chain corresponds to 162-199 (HTVAMSTLNFCGPNVINHFYCDLPQLCQLSCSSTQLSE). Residues 200–223 (LLLFAVGFIMAGTSMALIVISYIH) form a helical membrane-spanning segment. The Cytoplasmic segment spans residues 224–240 (VAAAVLRIRSVEGRKKA). The chain crosses the membrane as a helical span at residues 241 to 264 (FSTCGSHLTVVAIFYGSGIFNYMR). Over 265–275 (LGSTKLSDKDK) the chain is Extracellular. Residues 276–295 (AVGIFNTVINPMLNPIIYSF) form a helical membrane-spanning segment. The Cytoplasmic portion of the chain corresponds to 296–315 (RNPDVQSAIWRMLTGRRSLA).

It belongs to the G-protein coupled receptor 1 family.

It is found in the cell membrane. Functionally, odorant receptor. The polypeptide is Olfactory receptor 3A1 (OR3A1) (Gorilla gorilla gorilla (Western lowland gorilla)).